The sequence spans 351 residues: MTNSIRIGTRKSPLALIHTNLVIQQIKQFFPDINCEIVPIITSGDLIQNKPLYDIGGKALFLKEIEQALLDKKIDLAVHSLKDVPGRIPEPLVIAAVLEREDPRDVFVCLKYKSIEELPQNAVIGSSAVRRKAFIQKIRPDLKVTVFRGNVDSRIKKLMTGEVDATILAYTGLKRLEVFNPEYCHLIEYSQMLPCIGQGVIAVEIRKDDNAMLEICNQINHLPTFELIKPERAFLEYLDANCRTPIAAYSQYLDANPRHLSKLAYREVFEGNTEALATAAYKSNRTDVSTGLTYKLPLEVEFGKVSNIQTNFMLGNLDGSKITFHTETTNIKTSTEAGIKAAKMMLEAICK.

Residue Cys242 is modified to S-(dipyrrolylmethanemethyl)cysteine.

Belongs to the HMBS family. In terms of assembly, monomer. Requires dipyrromethane as cofactor.

It carries out the reaction 4 porphobilinogen + H2O = hydroxymethylbilane + 4 NH4(+). It participates in porphyrin-containing compound metabolism; protoporphyrin-IX biosynthesis; coproporphyrinogen-III from 5-aminolevulinate: step 2/4. Functionally, tetrapolymerization of the monopyrrole PBG into the hydroxymethylbilane pre-uroporphyrinogen in several discrete steps. The protein is Porphobilinogen deaminase of Rickettsia africae (strain ESF-5).